A 137-amino-acid chain; its full sequence is Small ribosomal subunit protein uS9 (137 aa).

Positions 104 to 137 (PLKSEGYLTRDPRAKERKKYGLHKARKAPQYSKR) are disordered. Basic residues predominate over residues 118–137 (KERKKYGLHKARKAPQYSKR).

Belongs to the universal ribosomal protein uS9 family.

This Gloeothece citriformis (strain PCC 7424) (Cyanothece sp. (strain PCC 7424)) protein is Small ribosomal subunit protein uS9.